We begin with the raw amino-acid sequence, 125 residues long: Small ribosomal subunit protein uS13 (125 aa).

The interval 97–125 (PLRGQRTKTNARTRKGKRKTVANKKMASK) is disordered.

The protein belongs to the universal ribosomal protein uS13 family. In terms of assembly, part of the 30S ribosomal subunit. Forms a loose heterodimer with protein S19. Forms two bridges to the 50S subunit in the 70S ribosome.

Its function is as follows. Located at the top of the head of the 30S subunit, it contacts several helices of the 16S rRNA. In the 70S ribosome it contacts the 23S rRNA (bridge B1a) and protein L5 of the 50S subunit (bridge B1b), connecting the 2 subunits; these bridges are implicated in subunit movement. Contacts the tRNAs in the A and P-sites. This chain is Small ribosomal subunit protein uS13, found in Borrelia hermsii (strain HS1 / DAH).